We begin with the raw amino-acid sequence, 228 residues long: uncharacterized protein (228 aa).

This is an uncharacterized protein from Mycobacterium tuberculosis (strain CDC 1551 / Oshkosh).